The following is a 312-amino-acid chain: Homoserine O-succinyltransferase (312 aa).

Catalysis depends on C142, which acts as the Acyl-thioester intermediate. Positions 163 and 192 each coordinate substrate. Residue H235 is the Proton acceptor of the active site. E237 is a catalytic residue. Residue R249 coordinates substrate.

It belongs to the MetA family.

Its subcellular location is the cytoplasm. It catalyses the reaction L-homoserine + succinyl-CoA = O-succinyl-L-homoserine + CoA. It functions in the pathway amino-acid biosynthesis; L-methionine biosynthesis via de novo pathway; O-succinyl-L-homoserine from L-homoserine: step 1/1. Functionally, transfers a succinyl group from succinyl-CoA to L-homoserine, forming succinyl-L-homoserine. This Alteromonas mediterranea (strain DSM 17117 / CIP 110805 / LMG 28347 / Deep ecotype) protein is Homoserine O-succinyltransferase.